A 45-amino-acid polypeptide reads, in one-letter code: LLACLFGNGRCSSNRDCCELTPVCKRGSCVSSGPGLVGGILGGIL.

3 cysteine pairs are disulfide-bonded: C4–C18, C11–C24, and C17–C29.

This sequence belongs to the neurotoxin 15 family. 02 (omega-actx) subfamily. In terms of tissue distribution, expressed by the venom gland.

Its subcellular location is the secreted. Potent inhibitor of insect (bee brain), but not mammalian (rat trigeminal neurons), voltage-gated calcium channels (Cav). In vivo, injection into lone star ticks (Amblyomma americanum) induces curling of all eight legs into closed loops, followed by death. The polypeptide is Omega-hexatoxin-Hv2a (Hadronyche versuta (Blue mountains funnel-web spider)).